The primary structure comprises 208 residues: ATP-dependent Clp protease proteolytic subunit (208 aa).

The active-site Nucleophile is Ser107. His132 is an active-site residue.

Belongs to the peptidase S14 family. Fourteen ClpP subunits assemble into 2 heptameric rings which stack back to back to give a disk-like structure with a central cavity, resembling the structure of eukaryotic proteasomes.

It is found in the cytoplasm. It catalyses the reaction Hydrolysis of proteins to small peptides in the presence of ATP and magnesium. alpha-casein is the usual test substrate. In the absence of ATP, only oligopeptides shorter than five residues are hydrolyzed (such as succinyl-Leu-Tyr-|-NHMec, and Leu-Tyr-Leu-|-Tyr-Trp, in which cleavage of the -Tyr-|-Leu- and -Tyr-|-Trp bonds also occurs).. In terms of biological role, cleaves peptides in various proteins in a process that requires ATP hydrolysis. Has a chymotrypsin-like activity. Plays a major role in the degradation of misfolded proteins. The sequence is that of ATP-dependent Clp protease proteolytic subunit from Jannaschia sp. (strain CCS1).